The following is a 383-amino-acid chain: Cytochrome b (383 aa).

The next 4 helical transmembrane spans lie at phenylalanine 35–methionine 55, tryptophan 79–isoleucine 100, tryptophan 115–leucine 135, and phenylalanine 180–phenylalanine 200. Heme b is bound by residues histidine 85 and histidine 99. Residues histidine 184 and histidine 198 each contribute to the heme b site. A ubiquinone is bound at residue histidine 203. 4 consecutive transmembrane segments (helical) span residues isoleucine 228–phenylalanine 248, leucine 290–asparagine 310, leucine 321–lysine 341, and phenylalanine 348–tyrosine 368.

The protein belongs to the cytochrome b family. The main subunits of complex b-c1 are: cytochrome b, cytochrome c1 and the Rieske protein. Heme b serves as cofactor.

The protein localises to the mitochondrion inner membrane. Functionally, component of the ubiquinol-cytochrome c reductase complex (complex III or cytochrome b-c1 complex) that is part of the mitochondrial respiratory chain. The b-c1 complex mediates electron transfer from ubiquinol to cytochrome c. Contributes to the generation of a proton gradient across the mitochondrial membrane that is then used for ATP synthesis. The sequence is that of Cytochrome b (MT-CYB) from Apis mellifera ligustica (Common honeybee).